A 212-amino-acid polypeptide reads, in one-letter code: ER lumen protein-retaining receptor 1 (212 aa).

At 1-4 the chain is on the lumenal side; it reads MNLF. A helical membrane pass occupies residues 5 to 24; that stretch reads RFLGDLSHLLAIILLLLKIW. The Cytoplasmic portion of the chain corresponds to 25–32; it reads KSRSCAGI. Residues 33–52 traverse the membrane as a helical segment; that stretch reads SGKSQVLFAVVFTARYLDLF. Residues 47 to 48 form an interaction with the K-D-E-L motif on target proteins region; that stretch reads RY. Residues 53 to 58 are Lumenal-facing; that stretch reads TNYISL. Residues 59 to 79 form a helical membrane-spanning segment; it reads YNTCMKVVYIACSFTTVWMIY. Residues 80 to 92 lie on the Cytoplasmic side of the membrane; that stretch reads SKFKATYDGNHDT. A helical membrane pass occupies residues 93 to 110; that stretch reads FRVEFLVVPTAILAFLVN. Residues 111 to 116 are Lumenal-facing; sequence HDFTPL. A helical transmembrane segment spans residues 117–135; it reads EILWTFSIYLESVAILPQL. At 136–149 the chain is on the cytoplasmic side; that stretch reads FMVSKTGEAETITS. Residues 150-168 traverse the membrane as a helical segment; that stretch reads HYLFALGVYRTLYLFNWIW. Residues 159–169 form an interaction with the K-D-E-L motif on target proteins region; the sequence is RTLYLFNWIWR. Topologically, residues 169–178 are lumenal; it reads RYHFEGFFDL. The chain crosses the membrane as a helical span at residues 179 to 199; sequence IAIVAGLVQTVLYCDFFYLYI. Over 200–212 the chain is Cytoplasmic; it reads TKVLKGKKLSLPA. The important for recycling of cargo proteins with the sequence motif K-D-E-L from the Golgi to the endoplasmic reticulum stretch occupies residues 204–207; it reads KGKK. Residue serine 209 is modified to Phosphoserine; by PKA.

It belongs to the ERD2 family. As to quaternary structure, upon ligand binding the receptor oligomerizes and interacts with components of the transport machinery such as ARFGAP1 and ARF1. In terms of processing, phosphorylation by PKA at Ser-209 is required for endoplasmic reticulum retention function.

It localises to the golgi apparatus membrane. The protein resides in the cytoplasmic vesicle. Its subcellular location is the COPI-coated vesicle membrane. The protein localises to the endoplasmic reticulum membrane. It is found in the endoplasmic reticulum-Golgi intermediate compartment membrane. Functionally, receptor for the C-terminal sequence motif K-D-E-L that is present on endoplasmic reticulum resident proteins and that mediates their recycling from the Golgi back to the endoplasmic reticulum. This Mus musculus (Mouse) protein is ER lumen protein-retaining receptor 1 (Kdelr1).